The chain runs to 259 residues: Apolipoprotein A-I (259 aa).

An N-terminal signal peptide occupies residues 1-18; the sequence is MKAAVLAVALVFLTGCQA. 2 consecutive repeat copies span residues 67–88 and 89–110. The interval 67–259 is 10 X approximate tandem repeats; sequence LNLLDNWDTL…IDEAKKKLNA (193 aa). Met109 bears the Methionine sulfoxide mark. The stretch at 111–121 is one 3; half-length repeat; it reads KDLENVKQKMQ. Residues 122–143 form repeat 4; it reads PHLDEFQEKWNEEVEAYRQKLE. A 5; truncated repeat occupies 144 to 161; it reads PLGTELHKNAKEMQRHLK. Repeat 6 spans residues 162 to 183; it reads VVAEEFRDRMRVNADALRAKFG. A 7; truncated repeat occupies 184–203; that stretch reads LYSDQMRENLAQRLTEIKNH. A Methionine sulfoxide modification is found at Met189. Repeat unit 8 spans residues 204–225; sequence PTLIEYHTKASDHLKTLGEKAK. A 9; half-length repeat occupies 226 to 236; that stretch reads PALDDLGQGLM. Position 236 is a methionine sulfoxide (Met236). Copy 10 of the repeat occupies 237–259; sequence PVLEAWKAKIMSMIDEAKKKLNA.

It belongs to the apolipoprotein A1/A4/E family. In terms of assembly, homodimer. Interacts with APOA1BP and CLU. Component of a sperm activating protein complex (SPAP), consisting of APOA1, an immunoglobulin heavy chain, an immunoglobulin light chain and albumin. Interacts with NDRG1. Interacts with SCGB3A2. Interacts with NAXE and YJEFN3. Post-translationally, glycosylated. In terms of processing, palmitoylated. Phosphorylation sites are present in the extracellular medium. Major protein of plasma HDL, also found in chylomicrons.

The protein resides in the secreted. Functionally, participates in the reverse transport of cholesterol from tissues to the liver for excretion by promoting cholesterol efflux from tissues and by acting as a cofactor for the lecithin cholesterol acyltransferase (LCAT). As part of the SPAP complex, activates spermatozoa motility. In Rattus norvegicus (Rat), this protein is Apolipoprotein A-I (Apoa1).